The primary structure comprises 560 residues: Choline/ethanolamine transporter FLVCR1 (560 aa).

The interval 1 to 43 (MARPDDEVGPAVAPGHPLGKGYLPVPKGAPDGEARLVPQNGPE) is disordered. Over 1–92 (MARPDDEVGP…EDVPCPACPP (92 aa)) the chain is Cytoplasmic. Residues 93–117 (RTALSPRRFVVLLIFSLYSLVNAFQ) form a helical membrane-spanning segment. The Extracellular segment spans residues 118–135 (WIQYSSISNVFEDFYEVS). Residues 136–163 (PLHINWLSMVYMVAYVPLIFPATWLLDT) form a helical membrane-spanning segment. At 164 to 165 (RG) the chain is on the cytoplasmic side. Residues 166–185 (LRLTALLGSGLNCLGAWVKC) traverse the membrane as a helical segment. The Extracellular portion of the chain corresponds to 186 to 192 (GSVQRHL). A helical membrane pass occupies residues 193-221 (FWVTMLGQILCSVAQVFILGLPSPVASVW). Residue Q207 participates in ethanolamine binding. Residues 222–226 (FGPKE) lie on the Cytoplasmic side of the membrane. Residues 227-252 (VSTACATAVLGNQLGTAVGFLLPPVL) form a helical membrane-spanning segment. Residues 253 to 270 (VPALGTQNSTGLLAHTQN) lie on the Extracellular side of the membrane. N270 carries an N-linked (GlcNAc...) asparagine glycan. The chain crosses the membrane as a helical span at residues 271-300 (NTDLLAHNINTMFYGTAFISTFLFFLTIIA). The Cytoplasmic segment spans residues 301-336 (FKEKPPLPPSQAQAVLRDSPPEEYSYKSSIWNLCRN). Residues 337–367 (IPFVLLLVSYGIMTGAFYSISTLLNQIILTY) form a helical membrane-spanning segment. The Extracellular portion of the chain corresponds to 368–371 (YVGE). A helical transmembrane segment spans residues 372-400 (EVNAGRIGLTLVVAGMVGSILCGLWLDYT). The Cytoplasmic portion of the chain corresponds to 401-402 (KT). Residues 403-425 (YKQTTLIVYVLSFIGMLIFTFTL) traverse the membrane as a helical segment. The Extracellular segment spans residues 426–428 (NLG). The helical transmembrane segment at 429–458 (YIIVVFFTGGILGFFMTGYLPLGFEFAVEI) threads the bilayer. Topologically, residues 459 to 466 (TYPESEGM) are cytoplasmic. The helical transmembrane segment at 467–492 (SSGLLNTAAQILGIFFTLAQGKITTD) threads the bilayer. Residue Q476 participates in ethanolamine binding. Q476 is a choline binding site. Topologically, residues 493 to 495 (YNS) are extracellular. A helical transmembrane segment spans residues 496 to 518 (PEAGNIFLCAWMFVGIILTALIK). Over 519–560 (SDLRRHNINTGLTNIDVKAVPVDSRVDPKPKVMVSIQSESSL) the chain is Cytoplasmic. S542 carries the phosphoserine modification.

This sequence belongs to the major facilitator superfamily. Feline leukemia virus subgroup C receptor (TC 2.A.1.28.1) family.

The protein resides in the cell membrane. It is found in the mitochondrion membrane. It carries out the reaction choline(out) = choline(in). The catalysed reaction is ethanolamine(in) = ethanolamine(out). It catalyses the reaction heme b(in) = heme b(out). Its function is as follows. Uniporter that mediates the transport of extracellular choline and ethanolamine into cells, thereby playing a key role in phospholipid biosynthesis. Choline and ethanolamine are the precursors of phosphatidylcholine and phosphatidylethanolamine, respectively, the two most abundant phospholipids. Transport is not coupled with proton transport and is exclusively driven by the choline (or ethanolamine) gradient across the plasma membrane. Also acts as a heme b transporter that mediates heme efflux from the cytoplasm to the extracellular compartment. In terms of biological role, uniporter that mediates the transport of extracellular choline and ethanolamine into cells. Choline and ethanolamine are the precursors of phosphatidylcholine and phosphatidylethanolamine, respectively, the two most abundant phospholipids. Transport is not coupled with proton transport and is exclusively driven by the choline (or ethanolamine) gradient across the plasma membrane. Also acts as a heme b transporter that mediates heme efflux from the cytoplasm to the extracellular compartment. Heme export depends on the presence of HPX and is required to maintain intracellular free heme balance, protecting cells from heme toxicity. Heme export provides protection from heme or ferrous iron toxicities in liver, brain, sensory neurons and during erythropoiesis, a process in which heme synthesis intensifies. Possibly export coproporphyrin and protoporphyrin IX, which are both intermediate products in the heme biosynthetic pathway. Does not export bilirubin. The molecular mechanism of heme transport, whether electrogenic, electroneutral or coupled to other ions, remains to be elucidated. Heme transporter that promotes heme efflux from the mitochondrion to the cytoplasm. Essential for erythroid differentiation. The polypeptide is Choline/ethanolamine transporter FLVCR1 (Flvcr1) (Mus musculus (Mouse)).